A 250-amino-acid chain; its full sequence is 1-(5-phosphoribosyl)-5-[(5-phosphoribosylamino)methylideneamino] imidazole-4-carboxamide isomerase (250 aa).

Asp-12 (proton acceptor) is an active-site residue. Asp-134 (proton donor) is an active-site residue.

Belongs to the HisA/HisF family.

The protein localises to the cytoplasm. It carries out the reaction 1-(5-phospho-beta-D-ribosyl)-5-[(5-phospho-beta-D-ribosylamino)methylideneamino]imidazole-4-carboxamide = 5-[(5-phospho-1-deoxy-D-ribulos-1-ylimino)methylamino]-1-(5-phospho-beta-D-ribosyl)imidazole-4-carboxamide. Its pathway is amino-acid biosynthesis; L-histidine biosynthesis; L-histidine from 5-phospho-alpha-D-ribose 1-diphosphate: step 4/9. The polypeptide is 1-(5-phosphoribosyl)-5-[(5-phosphoribosylamino)methylideneamino] imidazole-4-carboxamide isomerase (Actinobacillus pleuropneumoniae serotype 3 (strain JL03)).